The primary structure comprises 453 residues: Septin-10 (453 aa).

The disordered stretch occupies residues 18–43 (KTAHTSSQVSDHEQKQKDSPRSLTMS). Basic and acidic residues predominate over residues 27 to 37 (SDHEQKQKDSP). Positions 62–328 (QGFCFNILCV…ELYRRRKLEE (267 aa)) constitute a Septin-type G domain. Residues 72 to 79 (GETGIGKS) are G1 motif. GTP contacts are provided by residues 72 to 79 (GETGIGKS), Gly-127, 208 to 216 (KADAISKTE), Gly-262, and Arg-277. The segment at 124-127 (NTVG) is G3 motif. Residues 207-210 (AKAD) are G4 motif. A disordered region spans residues 433–453 (TFMTPGSNLRKDKDRKNSNFM). Residues 441–453 (LRKDKDRKNSNFM) are compositionally biased toward basic and acidic residues.

The protein belongs to the TRAFAC class TrmE-Era-EngA-EngB-Septin-like GTPase superfamily. Septin GTPase family. Septins polymerize into heterooligomeric protein complexes that form filaments, and can associate with cellular membranes, actin filaments and microtubules. GTPase activity is required for filament formation. Interacts with ADGB. In terms of processing, proteolytically cleaved in vitro in a calmodulin-dependent manner.

The protein localises to the cytoplasm. The protein resides in the cytoskeleton. Its subcellular location is the cell projection. It is found in the cilium. It localises to the flagellum. In terms of biological role, filament-forming cytoskeletal GTPase. May play a role in cytokinesis (Potential). The polypeptide is Septin-10 (Bos taurus (Bovine)).